Reading from the N-terminus, the 648-residue chain is Macrolide export ATP-binding/permease protein MacB 1 (648 aa).

The ABC transporter domain occupies 6 to 244 (LQLSGIRRHF…PAPTTSRADT (239 aa)). ATP is bound at residue 42–49 (GASGSGKS). Positions 222 to 248 (VVADRRREPTPPSPAPTTSRADTGGRG) are disordered. Transmembrane regions (helical) follow at residues 273–293 (FLTM…VALG), 521–541 (LTLL…IGVM), 578–598 (LVCL…GVLF), and 613–633 (AVLM…FFPA).

It belongs to the ABC transporter superfamily. Macrolide exporter (TC 3.A.1.122) family. In terms of assembly, homodimer. Part of the tripartite efflux system MacAB-TolC, which is composed of an inner membrane transporter, MacB, a periplasmic membrane fusion protein, MacA, and an outer membrane component, TolC. The complex forms a large protein conduit and can translocate molecules across both the inner and outer membranes. Interacts with MacA.

Its subcellular location is the cell inner membrane. Functionally, part of the tripartite efflux system MacAB-TolC. MacB is a non-canonical ABC transporter that contains transmembrane domains (TMD), which form a pore in the inner membrane, and an ATP-binding domain (NBD), which is responsible for energy generation. Confers resistance against macrolides. The protein is Macrolide export ATP-binding/permease protein MacB 1 of Aeromonas hydrophila subsp. hydrophila (strain ATCC 7966 / DSM 30187 / BCRC 13018 / CCUG 14551 / JCM 1027 / KCTC 2358 / NCIMB 9240 / NCTC 8049).